Reading from the N-terminus, the 155-residue chain is Probable Brix domain-containing ribosomal biogenesis protein (155 aa).

A Brix domain is found at 1–155 (MLLTTSRKPS…LLIRDFRVGE (155 aa)).

In terms of biological role, probably involved in the biogenesis of the ribosome. This chain is Probable Brix domain-containing ribosomal biogenesis protein, found in Methanothermobacter thermautotrophicus (strain ATCC 29096 / DSM 1053 / JCM 10044 / NBRC 100330 / Delta H) (Methanobacterium thermoautotrophicum).